Reading from the N-terminus, the 489-residue chain is Ammonium transporter Rh type C (489 aa).

Topologically, residues Met-1–Arg-21 are cytoplasmic. Residues Ile-22–Phe-42 form a helical membrane-spanning segment. The Extracellular portion of the chain corresponds to Ile-43–Tyr-75. An N-linked (GlcNAc...) asparagine glycan is attached at Asn-62. A helical membrane pass occupies residues Pro-76–Leu-96. The Cytoplasmic portion of the chain corresponds to Lys-97–Ser-100. Residues Phe-101–Met-121 form a helical membrane-spanning segment. At Gln-122–Glu-140 the chain is on the extracellular side. The chain crosses the membrane as a helical span at residues Gly-141–Gly-161. The Cytoplasmic segment spans residues Lys-162–Met-169. Residues Val-170 to Leu-190 form a helical membrane-spanning segment. The Extracellular segment spans residues His-191–Ala-195. Residues Gly-196 to Leu-216 form a helical membrane-spanning segment. Residues Tyr-217–Asp-235 lie on the Cytoplasmic side of the membrane. Residues Val-236 to Ile-256 traverse the membrane as a helical segment. Residues Thr-257 to Thr-266 are Extracellular-facing. A helical membrane pass occupies residues Ala-267 to Ala-287. The Cytoplasmic segment spans residues Ser-288–His-298. Residues Ile-299–Thr-319 traverse the membrane as a helical segment. Residue Pro-320 is a topological domain, extracellular. A helical membrane pass occupies residues Tyr-321 to Val-341. Residues Ser-342–Asn-359 are Cytoplasmic-facing. A helical membrane pass occupies residues Leu-360–Thr-380. Residues Glu-381–Ala-412 lie on the Extracellular side of the membrane. Residues Ala-413 to Leu-433 traverse the membrane as a helical segment. Topologically, residues Arg-434–Ser-489 are cytoplasmic.

This sequence belongs to the ammonium transporter (TC 2.A.49) family. Rh subfamily. In terms of assembly, homotrimer.

Its subcellular location is the apical cell membrane. Its function is as follows. Functions as an ammonia transporter. May play a role in the elimination of ammonia in the gill. The sequence is that of Ammonium transporter Rh type C (rhcg) from Gasterosteus aculeatus (Three-spined stickleback).